The primary structure comprises 256 residues: 4-hydroxy-tetrahydrodipicolinate reductase (256 aa).

NAD(+) contacts are provided by residues 12-17, Asp39, 86-88, and 110-113; these read GINGRV, GTT, and AANY. The Proton donor/acceptor role is filled by His144. A (S)-2,3,4,5-tetrahydrodipicolinate-binding site is contributed by His145. The active-site Proton donor is Lys148. 154-155 lines the (S)-2,3,4,5-tetrahydrodipicolinate pocket; the sequence is GT.

The protein belongs to the DapB family.

It localises to the cytoplasm. The catalysed reaction is (S)-2,3,4,5-tetrahydrodipicolinate + NAD(+) + H2O = (2S,4S)-4-hydroxy-2,3,4,5-tetrahydrodipicolinate + NADH + H(+). The enzyme catalyses (S)-2,3,4,5-tetrahydrodipicolinate + NADP(+) + H2O = (2S,4S)-4-hydroxy-2,3,4,5-tetrahydrodipicolinate + NADPH + H(+). It participates in amino-acid biosynthesis; L-lysine biosynthesis via DAP pathway; (S)-tetrahydrodipicolinate from L-aspartate: step 4/4. Catalyzes the conversion of 4-hydroxy-tetrahydrodipicolinate (HTPA) to tetrahydrodipicolinate. This chain is 4-hydroxy-tetrahydrodipicolinate reductase, found in Gluconacetobacter diazotrophicus (strain ATCC 49037 / DSM 5601 / CCUG 37298 / CIP 103539 / LMG 7603 / PAl5).